The following is a 736-amino-acid chain: Dynamin-1-like protein (736 aa).

The residue at position 1 (Met1) is an N-acetylmethionine. Residues 22–302 (IIQLPQIVVV…LMHHIRDCLP (281 aa)) form the Dynamin-type G domain. A G1 motif region spans residues 32-39 (GTQSSGKS). 32 to 40 (GTQSSGKSS) is a binding site for GTP. The segment at 58–60 (VTR) is G2 motif. The interval 146–149 (DLPG) is G3 motif. Positions 215–218 (TKLD) are G4 motif. GTP contacts are provided by residues 215–221 (TKLDLMD) and 246–249 (NRSQ). The interval 245–248 (VNRS) is G5 motif. A middle domain region spans residues 344–489 (YCNTIEGTAK…NEMVHNLVAI (146 aa)). The tract at residues 448 to 685 (NYSTQELLRF…NHVKDTLQSE (238 aa)) is interaction with GSK3B. The tract at residues 502–569 (ADACGLMNNN…IQDSRRETKN (68 aa)) is b domain. The tract at residues 523–590 (ELPSAVSRDK…VQEPTTGNWR (68 aa)) is disordered. At Ser529 the chain carries Phosphoserine. Glycyl lysine isopeptide (Lys-Gly) (interchain with G-Cter in SUMO) cross-links involve residues Lys532 and Lys535. Residues 537 to 554 (PSALAPASQEPSPAASAE) show a composition bias toward low complexity. Position 548 is a phosphoserine (Ser548). The segment covering 555–568 (ADGKLIQDSRRETK) has biased composition (basic and acidic residues). Residues Lys558 and Lys568 each participate in a glycyl lysine isopeptide (Lys-Gly) (interchain with G-Cter in SUMO) cross-link. 2 O-linked (GlcNAc) threonine glycosylation sites follow: Thr585 and Thr586. A Glycyl lysine isopeptide (Lys-Gly) (interchain with G-Cter in SUMO) cross-link involves residue Lys594. Residue Lys597 is modified to N6-acetyllysine; alternate. Residue Lys597 forms a Glycyl lysine isopeptide (Lys-Gly) (interchain with G-Cter in SUMO); alternate linkage. Lys606 is covalently cross-linked (Glycyl lysine isopeptide (Lys-Gly) (interchain with G-Cter in SUMO)). The residue at position 607 (Ser607) is a Phosphoserine. Residue Lys608 forms a Glycyl lysine isopeptide (Lys-Gly) (interchain with G-Cter in SUMO) linkage. Position 616 is a phosphoserine; by CDK1 and PINK1 (Ser616). Ser637 carries the post-translational modification Phosphoserine; by CAMK1 and PKA. Cys644 bears the S-nitrosocysteine mark. Residues 644–735 (CEVIERLIKS…IIAEIRETHL (92 aa)) form the GED domain. The important for homodimerization stretch occupies residues 654–668 (YFLIVRKNIQDSVPK).

The protein belongs to the TRAFAC class dynamin-like GTPase superfamily. Dynamin/Fzo/YdjA family. As to quaternary structure, homotetramer; dimerizes through the N-terminal GTP-middle region of one molecule binding to the GED domain of another DNM1L molecule. Oligomerizes in a GTP-dependent manner to form membrane-associated tubules with a spiral pattern. Interacts with GSK3B and MARCHF5. Interacts (via the GTPase and B domains) with UBE2I; the interaction promotes sumoylation of DNM1L, mainly in its B domain. Interacts with PPP3CA; the interaction dephosphorylates DNM1L and regulates its transition to mitochondria. Interacts with BCL2L1 isoform BCL-X(L) and CLTA; DNM1L and BCL2L1 isoform BCL-X(L) may form a complex in synaptic vesicles that also contains clathrin and MFF. Interacts with MFF; the interaction is inhibited by C11orf65/MFI. Interacts with FIS1; may form part of a larger protein complex at the endoplasmic reticulum-mitochondrial interface during mitochondrial fission. Interacts with CANX. Interacts with BCAP31. Interacts with MIEF2 and MIEF1; GTP-dependent, regulates GTP hydrolysis and DNM1L oligomerization. Interacts with PGAM5; this interaction leads to dephosphorylation at Ser-656 and activation of GTPase activity and eventually to mitochondria fragmentation. Interacts with RALBP1; during mitosis, recruits DNM1L to the mitochondrion and mediates its activation by the mitotic kinase cyclin B-CDK1. Interacts with FUNDC1; this interaction recruits DNM1L/DRP1 at ER-mitochondria contact sites. In terms of processing, phosphorylation/dephosphorylation events on two sites near the GED domain regulate mitochondrial fission. Phosphorylation on Ser-637 by CAMK1 and PKA inhibits the GTPase activity, leading to a defect in mitochondrial fission promoting mitochondrial elongation. Dephosphorylated on this site by PPP3CA which promotes mitochondrial fission. Phosphorylation on Ser-616 by CDK1 and PINK1 activates the GTPase activity and promotes mitochondrial fission. Phosphorylated in a circadian manner at Ser-637. Dephosphorylated by PGAM5. Sumoylated on various lysine residues within the B domain, probably by MUL1. Sumoylation positively regulates mitochondrial fission. Desumoylated by SENP5 during G2/M transition of mitosis. Appears to be linked to its catalytic activity. Post-translationally, S-nitrosylation increases DNM1L dimerization, mitochondrial fission and causes neuronal damage. In terms of processing, ubiquitination by MARCHF5 affects mitochondrial morphology. O-GlcNAcylation augments the level of the GTP-bound active form of DNM1L and induces translocation from the cytoplasm to mitochondria in cardiomyocytes. It also decreases phosphorylation at Ser-637. In terms of tissue distribution, ubiquitously expressed with highest levels found in skeletal muscles, heart, kidney and brain. Isoform 1 is brain-specific. Isoform 2 and isoform 3 are predominantly expressed in testis and skeletal muscles respectively. Isoform 4 is weakly expressed in brain, heart and kidney. Isoform 5 is dominantly expressed in liver, heart and kidney. Isoform 6 is expressed in neurons.

It localises to the cytoplasm. Its subcellular location is the cytosol. It is found in the golgi apparatus. The protein resides in the endomembrane system. The protein localises to the mitochondrion outer membrane. It localises to the peroxisome. Its subcellular location is the membrane. It is found in the clathrin-coated pit. The protein resides in the cytoplasmic vesicle. The protein localises to the secretory vesicle. It localises to the synaptic vesicle membrane. It catalyses the reaction GTP + H2O = GDP + phosphate + H(+). Its activity is regulated as follows. GTPase activity is increased by binding to phospholipid membranes. Functionally, functions in mitochondrial and peroxisomal division. Mediates membrane fission through oligomerization into membrane-associated tubular structures that wrap around the scission site to constrict and sever the mitochondrial membrane through a GTP hydrolysis-dependent mechanism. The specific recruitment at scission sites is mediated by membrane receptors like MFF, MIEF1 and MIEF2 for mitochondrial membranes. While the recruitment by the membrane receptors is GTP-dependent, the following hydrolysis of GTP induces the dissociation from the receptors and allows DNM1L filaments to curl into closed rings that are probably sufficient to sever a double membrane. Acts downstream of PINK1 to promote mitochondrial fission in a PRKN-dependent manner. Plays an important role in mitochondrial fission during mitosis. Through its function in mitochondrial division, ensures the survival of at least some types of postmitotic neurons, including Purkinje cells, by suppressing oxidative damage. Required for normal brain development, including that of cerebellum. Facilitates developmentally regulated apoptosis during neural tube formation. Required for a normal rate of cytochrome c release and caspase activation during apoptosis; this requirement may depend upon the cell type and the physiological apoptotic cues. Required for formation of endocytic vesicles. Proposed to regulate synaptic vesicle membrane dynamics through association with BCL2L1 isoform Bcl-X(L) which stimulates its GTPase activity in synaptic vesicles; the function may require its recruitment by MFF to clathrin-containing vesicles. Required for programmed necrosis execution. Rhythmic control of its activity following phosphorylation at Ser-637 is essential for the circadian control of mitochondrial ATP production. Its function is as follows. Inhibits peroxisomal division when overexpressed. In Homo sapiens (Human), this protein is Dynamin-1-like protein.